A 36-amino-acid chain; its full sequence is uncharacterized protein (36 aa).

It is found in the mitochondrion. This is an uncharacterized protein from Saccharomyces cerevisiae (strain ATCC 204508 / S288c) (Baker's yeast).